We begin with the raw amino-acid sequence, 250 residues long: MSRGRGVPMMDLKRSYDVEDRVVSVSIPSIIEADEADLWPLPEIDTKKSKFPCCIVWTPLPVVSWLAPFIGHIGLCREDGVILDFAGSNFINVDDFAFGPPARYLQLDRTKCCLPPNMGGHTCKYGFKHTDFGTARTWDNALSSSTRSFEHKTYNIFTCNCHSFVANCLNRLCYGGSMEWNMVNVAILLMIKGKWINGSSVVRSFLPCAVVTSLGVVLVGWPFLIGLSSFSLLLFAWFIIATYCFKNIIT.

3 helical membrane passes run 55-75 (IVWTPLPVVSWLAPFIGHIGL), 200-220 (SVVRSFLPCAVVTSLGVVLVG), and 221-241 (WPFLIGLSSFSLLLFAWFIIA).

Interacts with ETR1 through a region corresponding to its ethylene-binding domain. In terms of tissue distribution, strongly expressed in 1-4-day-old seedlings in the apical hook, cotyledons, root vascular tissue, root tip and root hairs, with little or no expression in the hypocotyl. In light-grown seedlings, expression could also be seen in the apex and young leaves, and disappeared from the cotyledons by 10 days. In mature plants, expressed in floral buds, the style of mature flowers, stems and the rachis.

The protein localises to the endoplasmic reticulum membrane. It localises to the golgi apparatus membrane. In terms of biological role, acts at an early step in the ethylene signaling pathway. Positively regulates ETR1, leading to the negative regulation of ethylene responses. The chain is Protein REVERSION-TO-ETHYLENE SENSITIVITY1 (RTE1) from Arabidopsis thaliana (Mouse-ear cress).